Reading from the N-terminus, the 563-residue chain is E3 ubiquitin-protein ligase IpaH2.5 (563 aa).

Residues 1–270 (MIKSTNIQVI…PDYSGPQIFF (270 aa)) form an interaction with target proteins region. LRR repeat units lie at residues 69–90 (LQNQ…PDLP), 91–115 (PQIT…MLKV), 117–130 (HAQF…PALP), 131–150 (ETLE…PFLP), 151–170 (ENLT…PLLP), 171–195 (PELK…KLEG), 197–209 (ALAN…LPEL), and 210–233 (PFSM…VLRL). The tract at residues 271 to 281 (SMGNSATISAP) is linker. Residues 282–563 (EHSLADAVTA…YRQLTDEVLA (282 aa)) are E3 ubiquitin-protein ligase catalytic domain. In terms of domain architecture, NEL spans 284–563 (SLADAVTAWF…YRQLTDEVLA (280 aa)). Cys-368 (glycyl thioester intermediate) is an active-site residue.

It belongs to the LRR-containing bacterial E3 ligase family. In terms of assembly, interacts with human RBCK1/HOIL-1 and RNF31/HOIP components of the LUBAC complex. Post-translationally, ubiquitinated in the presence of host E1 ubiquitin-activating enzyme, E2 ubiquitin-conjugating enzyme and ubiquitin.

It is found in the secreted. The protein localises to the host cytoplasm. It catalyses the reaction S-ubiquitinyl-[E2 ubiquitin-conjugating enzyme]-L-cysteine + [acceptor protein]-L-lysine = [E2 ubiquitin-conjugating enzyme]-L-cysteine + N(6)-ubiquitinyl-[acceptor protein]-L-lysine.. The protein operates within protein modification; protein ubiquitination. With respect to regulation, exists in an autoinhibited state in the absence of substrate protein, probably due to interactions of the leucine-rich repeat domain with the catalytic domain. Is activated upon binding to a substrate protein. Its function is as follows. E3 ubiquitin-protein ligase effector that inhibits host cell innate immunity during bacterial infection by catalyzing 'Lys-48'-linked polyubiquitination and subsequent degradation of host RNF31/HOIP. Host RNF31/HOIP is the catalytic component of the LUBAC complex, which conjugates linear ('Met-1'-linked) polyubiquitin chains at the surface of bacteria invading the host cytosol to form the ubiquitin coat surrounding bacteria. The bacterial ubiquitin coat acts as an 'eat-me' signal for xenophagy and promotes NF-kappa-B activation. This is E3 ubiquitin-protein ligase IpaH2.5 from Shigella flexneri.